The following is a 695-amino-acid chain: Probable serine/threonine-protein kinase DDB_G0279405 (695 aa).

2 disordered regions span residues 119–138 (IVAQPQPQPQPQPQPQPQPQ) and 149–192 (QIPT…KRHK). A compositionally biased stretch (pro residues) spans 124 to 138 (QPQPQPQPQPQPQPQ). The span at 149-160 (QIPTTPPQQISQ) shows a compositional bias: low complexity. Over residues 161–173 (FNITGNKSPSSIG) the composition is skewed to polar residues. The region spanning 201 to 462 (YVFVRKLGKG…IAEIKSHKWT (262 aa)) is the Protein kinase domain. Residues 207-215 (LGKGTFGKV) and K230 contribute to the ATP site. D329 serves as the catalytic Proton acceptor. Residues 491-580 (TDHTIKPSDN…NQNQNNNNNS (90 aa)) are disordered. Low complexity predominate over residues 510 to 528 (LSSSSGGESSGIIGSSNES). A compositionally biased stretch (polar residues) spans 529–541 (KSMYNNVNSKQKI). A compositionally biased stretch (low complexity) spans 542-580 (QNQNQNQNQNQNQNQNQNQNQNHNQNQNQNQNQNNNNNS).

Belongs to the protein kinase superfamily. Ser/Thr protein kinase family.

The catalysed reaction is L-seryl-[protein] + ATP = O-phospho-L-seryl-[protein] + ADP + H(+). It catalyses the reaction L-threonyl-[protein] + ATP = O-phospho-L-threonyl-[protein] + ADP + H(+). The protein is Probable serine/threonine-protein kinase DDB_G0279405 of Dictyostelium discoideum (Social amoeba).